We begin with the raw amino-acid sequence, 555 residues long: Phosphoglucomutase (555 aa).

2 residues coordinate alpha-D-glucose 1,6-bisphosphate: arginine 22 and serine 114. Serine 114 serves as the catalytic Phosphoserine intermediate. Residues serine 114, aspartate 279, aspartate 281, and aspartate 283 each coordinate Mg(2+). Phosphoserine is present on serine 114. 6 residues coordinate alpha-D-glucose 1,6-bisphosphate: aspartate 283, arginine 284, threonine 347, glutamate 366, serine 368, and lysine 379.

Belongs to the phosphohexose mutase family. As to quaternary structure, monomer. Requires Mg(2+) as cofactor.

The protein resides in the cytoplasm. The catalysed reaction is alpha-D-glucose 1-phosphate = alpha-D-glucose 6-phosphate. It catalyses the reaction O-phospho-L-seryl-[protein] + alpha-D-glucose 1-phosphate = alpha-D-glucose 1,6-bisphosphate + L-seryl-[protein]. It carries out the reaction alpha-D-glucose 1,6-bisphosphate + L-seryl-[protein] = O-phospho-L-seryl-[protein] + alpha-D-glucose 6-phosphate. In terms of biological role, catalyzes the reversible isomerization of alpha-D-glucose 1-phosphate to alpha-D-glucose 6-phosphate. The mechanism proceeds via the intermediate compound alpha-D-glucose 1,6-bisphosphate. Key enzyme in hexose metabolism. The reverse reaction is an essential step for biosynthesis because glucose 1-phosphate is the starting point for the synthesis of UDP-glucose, which acts as a precursor for the synthesis of oligosaccharides and trehalose. This chain is Phosphoglucomutase (pgmA), found in Aspergillus oryzae (strain ATCC 42149 / RIB 40) (Yellow koji mold).